A 199-amino-acid chain; its full sequence is NAD(P)H dehydrogenase (quinone) (199 aa).

Residues 4–190 (VLVLYYSAYG…AGARYQGKTI (187 aa)) enclose the Flavodoxin-like domain. Residues 10–15 (SAYGHI) and 78–80 (TRF) each bind FMN. Tyrosine 12 contributes to the NAD(+) binding site. Tryptophan 98 lines the substrate pocket. Residues 113 to 119 (STATQHG) and histidine 134 contribute to the FMN site.

Belongs to the WrbA family. FMN is required as a cofactor.

It carries out the reaction a quinone + NADH + H(+) = a quinol + NAD(+). It catalyses the reaction a quinone + NADPH + H(+) = a quinol + NADP(+). The protein is NAD(P)H dehydrogenase (quinone) of Rhodopseudomonas palustris (strain TIE-1).